The chain runs to 1614 residues: Chitin synthase csmA (1614 aa).

Positions 1–22 (MAGPAPSGRTPSHAQSSLPSLP) are disordered. The 788-residue stretch at 1–788 (MAGPAPSGRT…CWADLAKLGE (788 aa)) folds into the Myosin motor domain. Polar residues predominate over residues 9 to 19 (RTPSHAQSSLP). An ATP-binding site is contributed by 105–112 (GESGSGKT). The segment at 600-650 (QVSSKPMRMPSMARRKAGPSRLAFDAPEGDDQDEYDSQAGSMSKSSARRKS) is disordered. The span at 626–635 (PEGDDQDEYD) shows a compositional bias: acidic residues. The tract at residues 668–692 (LDIVSKCLNSANLNPYFVFCLKPND) is actin-binding. 2 helical membrane passes run 898-918 (WMAI…KTFG) and 937-957 (LIIW…PGLI). Residues 961–1020 (QHVYSTAELSSHNGKDGHNSFVAIRGIVFNLDKFMPSHYPDIVPEKSLKKYAGTDATGLF) enclose the Cytochrome b5 heme-binding domain. 2 N-linked (GlcNAc...) asparagine glycosylation sites follow: asparagine 1047 and asparagine 1072. A helical membrane pass occupies residues 1209–1229 (FILAISIFICLIVVFKFLAAL). The N-linked (GlcNAc...) asparagine glycan is linked to asparagine 1572.

This sequence in the N-terminal section; belongs to the TRAFAC class myosin-kinesin ATPase superfamily. Myosin family. The protein in the C-terminal section; belongs to the chitin synthase family. Class V subfamily.

It localises to the cell membrane. Its subcellular location is the cell septum. The protein localises to the cell tip. The catalysed reaction is [(1-&gt;4)-N-acetyl-beta-D-glucosaminyl](n) + UDP-N-acetyl-alpha-D-glucosamine = [(1-&gt;4)-N-acetyl-beta-D-glucosaminyl](n+1) + UDP + H(+). Its function is as follows. Polymerizes chitin, a structural polymer of the cell wall and septum, by transferring the sugar moiety of UDP-GlcNAc to the non-reducing end of the growing chitin polymer. Acts as the major chitin synthase in Aspergillus niger involved in cell wall integrity which is principally responsible for chitin synthesis at the lateral cell wall. Plays an important role in septal growth or maintenance. Mediates colony spore formation. The protein is Chitin synthase csmA of Aspergillus niger (strain ATCC MYA-4892 / CBS 513.88 / FGSC A1513).